The primary structure comprises 293 residues: 3-hydroxybutyrate-oligomer hydrolase (293 aa).

This sequence belongs to the AB hydrolase superfamily.

Its subcellular location is the cytoplasm. It catalyses the reaction (3R)-hydroxybutanoate pentamer + H2O = (3R)-hydroxybutanoate tetramer + (R)-3-hydroxybutanoate + H(+). The enzyme catalyses (3R)-hydroxybutanoate tetramer + H2O = (3R)-hydroxybutanoate trimer + (R)-3-hydroxybutanoate + H(+). It carries out the reaction (3R)-hydroxybutanoate trimer + H2O = (3R)-hydroxybutanoate dimer + (R)-3-hydroxybutanoate + H(+). The catalysed reaction is (3R)-hydroxybutanoate dimer + H2O = 2 (R)-3-hydroxybutanoate + H(+). It catalyses the reaction [(3R)-hydroxybutanoate](n) + H2O = [(3R)-hydroxybutanoate](n-1) + (R)-3-hydroxybutanoate + H(+). Its function is as follows. Catalyzes the degradation of various 3-hydroxybutyrate (3HB) oligomers at a high specific activity and artificial amorphous poly(3-hydroxybutyrate) (PHB) at a lower specific activity. Hydrolyzes the 3HB pentamer most efficiently than the tetramer, trimer and dimer. Does not hydrolyze native PHB granules and semicrystalline PHB. Participates in the mobilization of PHB along with other hydrolases. This Cupriavidus necator (strain ATCC 17699 / DSM 428 / KCTC 22496 / NCIMB 10442 / H16 / Stanier 337) (Ralstonia eutropha) protein is 3-hydroxybutyrate-oligomer hydrolase.